The primary structure comprises 228 residues: Translin (228 aa).

A DNA/RNA binding region spans residues 86–90 (RFHEH). The segment at 177-198 (LDSGFRLLNLKNDSLRKRYDGL) is leucine-zipper. The residue at position 187 (K187) is an N6-acetyllysine. S190 carries the phosphoserine modification. N6-acetyllysine is present on K199.

It belongs to the translin family. Ring-shaped heterooctamer of six TSN and two TSNAX subunits, DNA/RNA binding occurs inside the ring.

It is found in the cytoplasm. It localises to the nucleus. DNA-binding protein that specifically recognizes consensus sequences at the breakpoint junctions in chromosomal translocations, mostly involving immunoglobulin (Ig)/T-cell receptor gene segments. Seems to recognize single-stranded DNA ends generated by staggered breaks occurring at recombination hot spots. Its function is as follows. Exhibits both single-stranded and double-stranded endoribonuclease activity. May act as an activator of RNA-induced silencing complex (RISC) by facilitating endonucleolytic cleavage of the siRNA passenger strand. The chain is Translin (TSN) from Bos taurus (Bovine).